The primary structure comprises 385 residues: Probable thioesterase PNKD (385 aa).

Over residues 31 to 42 (NKASQNRSRALQ) the composition is skewed to polar residues. The disordered stretch occupies residues 31–57 (NKASQNRSRALQSHSSPECKEEPEPLS). 7 residues coordinate Zn(2+): His-172, His-174, Asp-176, His-177, His-229, Asp-253, and His-291.

It belongs to the metallo-beta-lactamase superfamily. Glyoxalase II family. It depends on Zn(2+) as a cofactor. Post-translationally, undergoes cleavage at the N-terminus.

The protein resides in the cell membrane. Its subcellular location is the mitochondrion. The catalysed reaction is a thioester + H2O = a thiol + a carboxylate + H(+). Probable thioesterase that may play a role in cellular detoxification processes; it likely acts on a yet-unknown alpha-hydroxythioester substrate. In vitro, it is able to catalyze the hydrolysis of S-D-lactoyl-glutathione to form glutathione and D-lactic acid at very low rate, though this reaction is not physiologically relevant in vivo. The protein is Probable thioesterase PNKD (PNKD) of Bos taurus (Bovine).